A 360-amino-acid chain; its full sequence is Cyclin-Y-like protein 2 (360 aa).

Positions 204-286 (RLTAEFAIVS…FLKLINYNIG (83 aa)) constitute a Cyclin N-terminal domain.

This sequence belongs to the cyclin family. Cyclin Y subfamily.

The polypeptide is Cyclin-Y-like protein 2 (CCNYL2) (Macaca fascicularis (Crab-eating macaque)).